A 179-amino-acid chain; its full sequence is Interferon lambda-4 (179 aa).

The first 21 residues, 1-21 (MRPSVWAAVAAGLWVLCTVIA), serve as a signal peptide directing secretion. Residues 130–149 (SSRKVPGAQKRRHKPRRADS) form a disordered region.

Belongs to the lambda interferon family.

The protein resides in the cytoplasm. Its subcellular location is the secreted. Its function is as follows. Cytokine that may trigger an antiviral response activating the JAK-STAT pathway and up-regulating specifically some interferon-stimulated genes. The protein is Interferon lambda-4 (IFNL4) of Homo sapiens (Human).